A 314-amino-acid chain; its full sequence is DNA-directed RNA polymerase subunit alpha (314 aa).

The interval 1–228 (MAQYTIECVE…DQLRPLQEIT (228 aa)) is alpha N-terminal domain (alpha-NTD). Residues 241 to 314 (NTVGQVPIEE…SLPKDKPARS (74 aa)) are alpha C-terminal domain (alpha-CTD).

It belongs to the RNA polymerase alpha chain family. As to quaternary structure, in cyanobacteria the RNAP catalytic core is composed of 2 alpha, 1 beta, 1 beta', 1 gamma and 1 omega subunit. When a sigma factor is associated with the core the holoenzyme is formed, which can initiate transcription.

It catalyses the reaction RNA(n) + a ribonucleoside 5'-triphosphate = RNA(n+1) + diphosphate. In terms of biological role, DNA-dependent RNA polymerase catalyzes the transcription of DNA into RNA using the four ribonucleoside triphosphates as substrates. This chain is DNA-directed RNA polymerase subunit alpha, found in Gloeobacter violaceus (strain ATCC 29082 / PCC 7421).